We begin with the raw amino-acid sequence, 1092 residues long: Leukemia inhibitory factor receptor (1092 aa).

The first 43 residues, 1–43 (MAAYSWWRQPSWMVDNKRSRMTPNLPWLLSALTLLHLTMHANG), serve as a signal peptide directing secretion. Over 44–828 (LKRGVQDLKC…SMFVVTKENS (785 aa)) the chain is Extracellular. A Fibronectin type-III 1 domain is found at 45–126 (KRGVQDLKCT…QSKFTLNEKD (82 aa)). 2 disulfides stabilise this stretch: Cys-53–Cys-63 and Cys-80–Cys-88. N-linked (GlcNAc...) asparagine glycans are attached at residues Asn-164, Asn-199, Asn-238, and Asn-261. Intrachain disulfides connect Cys-208-Cys-265 and Cys-336-Cys-346. 5 consecutive Fibronectin type-III domains span residues 330–429 (VPQK…VAPH), 430–529 (DPTS…TEAT), 533–624 (GPDT…IPND), 622–714 (PNDD…IGYV), and 719–828 (PIVA…KENS). 6 N-linked (GlcNAc...) asparagine glycosylation sites follow: Asn-385, Asn-402, Asn-421, Asn-440, Asn-453, and Asn-476. Cys-461 and Cys-506 are disulfide-bonded. Positions 514–518 (WSRWS) match the WSXWS motif motif. Asn-567, Asn-647, Asn-658, Asn-675, Asn-724, and Asn-782 each carry an N-linked (GlcNAc...) asparagine glycan. Residues 829–853 (VGLIIAILIPVAVAVIVGVVTSILC) form a helical membrane-spanning segment. Over 854–1092 (YRKREWIKET…TNFFQNKPND (239 aa)) the chain is Cytoplasmic. A Box 1 motif motif is present at residues 864 to 872 (FYPDIPNPE). A phosphoserine mark is found at Ser-922 and Ser-1039. Residues 1009–1092 (EDTAAEDEEG…TNFFQNKPND (84 aa)) are disordered. 2 stretches are compositionally biased toward polar residues: residues 1027 to 1062 (ANVN…NSRQ) and 1081 to 1092 (SFTNFFQNKPND).

It belongs to the type I cytokine receptor family. Type 2 subfamily. In terms of assembly, heterodimer composed of LIFR and IL6ST. The heterodimer formed by LIFR and IL6ST interacts with the complex formed by CNTF and CNTFR. In terms of tissue distribution, placenta, liver, kidney, heart, lung, brain, and embryos. The liver may be the primary site of synthesis of the secreted form.

The protein localises to the cell membrane. It localises to the secreted. Functionally, signal-transducing molecule. May have a common pathway with IL6ST. The soluble form inhibits the biological activity of LIF by blocking its binding to receptors on target cells. This Mus musculus (Mouse) protein is Leukemia inhibitory factor receptor (Lifr).